We begin with the raw amino-acid sequence, 104 residues long: Putative membrane protein insertion efficiency factor (104 aa).

The disordered stretch occupies residues 83 to 104 (SSPTPLAESPDDRTVPHTQETS).

Belongs to the UPF0161 family.

Its subcellular location is the cell inner membrane. In terms of biological role, could be involved in insertion of integral membrane proteins into the membrane. This is Putative membrane protein insertion efficiency factor from Chlamydia trachomatis serovar D (strain ATCC VR-885 / DSM 19411 / UW-3/Cx).